A 347-amino-acid polypeptide reads, in one-letter code: Integrin beta-1-binding protein 2 (347 aa).

Zn(2+) contacts are provided by cysteine 5, cysteine 10, cysteine 24, and histidine 27. The CHORD 1 domain occupies 5-64 (CRNKGCGQHFDPNTNLPDSCCHHPGVPIFHDALKGWSCCRKRTVDFSEFLNIKGCTMGPH). The SH3-binding motif lies at 28-31 (PGVP). Zn(2+)-binding residues include cysteine 42, cysteine 43, cysteine 59, and histidine 64. The short motif at 70-78 (PEAPQPEGP) is the SH3-binding element. Cysteine 149 and cysteine 154 together coordinate Zn(2+). The region spanning 149 to 208 (CQNPGCDAVYQGPESDATPCTYHPGAPRFHEGMKSWSCCGIQTLDFGAFLAQPGCRVGRH) is the CHORD 2 domain. Positions 158-161 (YQGP) match the SH2-binding motif. Zn(2+) contacts are provided by cysteine 168 and histidine 171. The SH3-binding motif lies at 172–175 (PGAP). Zn(2+) contacts are provided by cysteine 186, cysteine 187, cysteine 203, and histidine 208. Positions 215 to 304 (PASCRHDWHQ…ADPGSWAQLE (90 aa)) constitute a CS domain. An SH2-binding motif is present at residues 234–237 (YGQI). Positions 319–347 (LEMDEEESDDSDDDLSWTEEEEEEEAMGE) are disordered. Positions 320–347 (EMDEEESDDSDDDLSWTEEEEEEEAMGE) are enriched in acidic residues.

As to quaternary structure, interacts with beta-1 integrin subunit. This interaction is regulated by divalent cations, and it occurs only in absence of calcium. As to expression, expressed in skeletal and cardiac muscles but not in other tissues.

In terms of biological role, may play a role during maturation and/or organization of muscles cells. In Homo sapiens (Human), this protein is Integrin beta-1-binding protein 2 (ITGB1BP2).